Consider the following 328-residue polypeptide: Ribosomal RNA small subunit methyltransferase H (328 aa).

S-adenosyl-L-methionine is bound by residues 37–39 (GGH), Asp57, Phe83, Asp104, and Gln111.

It belongs to the methyltransferase superfamily. RsmH family.

It is found in the cytoplasm. The catalysed reaction is cytidine(1402) in 16S rRNA + S-adenosyl-L-methionine = N(4)-methylcytidine(1402) in 16S rRNA + S-adenosyl-L-homocysteine + H(+). In terms of biological role, specifically methylates the N4 position of cytidine in position 1402 (C1402) of 16S rRNA. The chain is Ribosomal RNA small subunit methyltransferase H from Neisseria meningitidis serogroup B (strain ATCC BAA-335 / MC58).